A 268-amino-acid polypeptide reads, in one-letter code: L-proline trans-4-hydroxylase (268 aa).

Fe cation is bound by residues His113, Asp115, and His218.

Belongs to the PhyH family. Monomer. Fe(2+) serves as cofactor.

It catalyses the reaction L-proline + 2-oxoglutarate + O2 = trans-4-hydroxy-L-proline + succinate + CO2. The protein operates within antibiotic biosynthesis. Its activity is regulated as follows. Competitively inhibited by pyridine-2,4-dicarboxylate. Inhibited by diethyl pyrocarbonate (DEPC), 3,4-dihydroxybenzoate, pyridine-2,5-dicarboxylate, alpha,alpha'-dipyridyl, and some metal ions such as Co(2+) and Zn(2+). In terms of biological role, involved in the biosynthesis of the peptidolactone antibiotic etamycin (viridogrisein). Catalyzes the hydroxylation of free L-proline at the C-4 position to yield trans-4-hydroxy-L-proline. The protein is L-proline trans-4-hydroxylase of Streptomyces griseoviridis.